We begin with the raw amino-acid sequence, 116 residues long: Propanediol dehydratase-reactivating factor small subunit (116 aa).

Residue E31 participates in Mg(2+) binding.

Belongs to the DdrB/PduH family. In terms of assembly, forms a heterotetramer PduG(2)/PduH(2). It depends on Mg(2+) as a cofactor.

It localises to the bacterial microcompartment. It catalyses the reaction ATP + H2O = ADP + phosphate + H(+). Its pathway is polyol metabolism; 1,2-propanediol degradation. Small subunit of the propanediol dehydratase-reactivating factor (DDR), which reactivates suicidally inhibited adenosylcobalamin-dependent propanediol dehydratase (diol dehydratase, DDH) found in the bacterial microcompartment (BMC) dedicated to 1,2-propanediol (1,2-PD) degradation. Reactivates inactivated DDH in the presence of ATP, Mg(2+) and free adenosylcobalamin (AdoCbl), by mediating the exchange of the tightly bound damaged cofactor AdoCbl for a free intact one. In terms of biological role, the 1,2-PD-specific bacterial microcompartment (BMC) concentrates low levels of 1,2-PD catabolic enzymes, concentrates volatile reaction intermediates thus enhancing pathway flux and keeps the level of toxic, mutagenic propionaldehyde low. The sequence is that of Propanediol dehydratase-reactivating factor small subunit from Salmonella typhimurium (strain LT2 / SGSC1412 / ATCC 700720).